The sequence spans 130 residues: Large ribosomal subunit protein bL12 (130 aa).

This sequence belongs to the bacterial ribosomal protein bL12 family. As to quaternary structure, homodimer. Part of the ribosomal stalk of the 50S ribosomal subunit. Forms a multimeric L10(L12)X complex, where L10 forms an elongated spine to which 2 to 4 L12 dimers bind in a sequential fashion. Binds GTP-bound translation factors.

Forms part of the ribosomal stalk which helps the ribosome interact with GTP-bound translation factors. Is thus essential for accurate translation. The polypeptide is Large ribosomal subunit protein bL12 (Mycobacterium bovis (strain ATCC BAA-935 / AF2122/97)).